Consider the following 81-residue polypeptide: uncharacterized protein (81 aa).

This is an uncharacterized protein from Dictyostelium discoideum (Social amoeba).